A 522-amino-acid polypeptide reads, in one-letter code: Neuropeptide FF receptor 2 (522 aa).

Residues Met1 to Ala147 are Extracellular-facing. The interval Lys25–Glu49 is disordered. N-linked (GlcNAc...) asparagine glycosylation is found at Asn110, Asn122, and Asn133. Residues Ala148–Val168 traverse the membrane as a helical segment. The Cytoplasmic portion of the chain corresponds to Cys169 to Leu184. Residues Phe185–Leu205 form a helical membrane-spanning segment. Topologically, residues Leu206–Lys221 are extracellular. An intrachain disulfide couples Cys220 to Cys308. The helical transmembrane segment at Ile222–Ala242 threads the bilayer. At Val243–Ala262 the chain is on the cytoplasmic side. A helical transmembrane segment spans residues Phe263–Met283. The Extracellular segment spans residues Leu284–Lys319. Asn300 is a glycosylation site (N-linked (GlcNAc...) asparagine). A helical transmembrane segment spans residues Ile320–Met340. At Tyr341–Met377 the chain is on the cytoplasmic side. The chain crosses the membrane as a helical span at residues Leu378–Leu398. Topologically, residues Ser399 to Asn413 are extracellular. A helical transmembrane segment spans residues Ile414–Ile434. The Cytoplasmic segment spans residues Tyr435–Ile522.

The protein belongs to the G-protein coupled receptor 1 family. As to expression, isoform 1 is abundant in placenta. Relatively highly expressed in thymus, testis, and small intestine. Expressed at low levels in several tissues including spleen, prostate, brain, heart, ovary, colon, kidney, lung, liver and pancreas and not expressed in skeletal muscle and leukocytes. Isoform 2 expression is highest in placenta (but at relatively low level compared to isoform 1). Very low level of expression in numerous tissues including adipose tissue and many brain regions. Isoform 3 is expressed in brain and heart and, at lower levels, in kidney, liver, lung and pancreas.

Its subcellular location is the cell membrane. Its function is as follows. Receptor for NPAF (A-18-F-amide) and NPFF (F-8-F-amide) neuropeptides, also known as morphine-modulating peptides. Can also be activated by a variety of naturally occurring or synthetic FMRF-amide like ligands. This receptor mediates its action by association with G proteins that activate a phosphatidylinositol-calcium second messenger system. This Homo sapiens (Human) protein is Neuropeptide FF receptor 2.